The sequence spans 506 residues: Gamma-aminobutyric acid receptor subunit epsilon (506 aa).

The first 22 residues, 1–22 (MLSKVLPVLLGILLILQSRVEG), serve as a signal peptide directing secretion. Positions 23–66 (PQTESKNEASSRDVVYGPQPQPLENQLLSEETKSTETETGSRVG) are disordered. Residues 23–280 (PQTESKNEAS…FNVSRRFGYV (258 aa)) are Extracellular-facing. Asn134 carries N-linked (GlcNAc...) asparagine glycosylation. Cys195 and Cys209 are oxidised to a cystine. An N-linked (GlcNAc...) asparagine glycan is attached at Asn252. The helical transmembrane segment at 281-301 (AFQNYVPSSVTTMLSWVSFWI) threads the bilayer. Residues 302–307 (KTESAP) are Cytoplasmic-facing. Residues 308 to 327 (ARTSLGITSVLTMTTLGTFS) traverse the membrane as a helical segment. Residues 328–343 (RKNFPRVSYITALDFY) are Extracellular-facing. Residues 344 to 364 (IAICFVFCFCALLEFAVLNFL) traverse the membrane as a helical segment. Residues 365-485 (IYNQTKAHAS…HVYRLDNYSR (121 aa)) lie on the Cytoplasmic side of the membrane. Residues 413–438 (EGSDGEERPSCSAQQPPSPGSPEGPR) are disordered. A helical transmembrane segment spans residues 486 to 506 (VVFPVTFFFFNVLYWLVCLNL).

The protein belongs to the ligand-gated ion channel (TC 1.A.9) family. Gamma-aminobutyric acid receptor (TC 1.A.9.5) subfamily. GABRE sub-subfamily. As to quaternary structure, heteropentamer, formed by a combination of alpha (GABRA1-6), beta (GABRB1-3), gamma (GABRG1-3), delta (GABRD), epsilon (GABRE), rho (GABRR1-3), pi (GABRP) and theta (GABRQ) chains, each subunit exhibiting distinct physiological and pharmacological properties. In terms of tissue distribution, expressed in many tissues. Highest levels of expression in adult heart and placenta.

The protein resides in the cell membrane. It is found in the postsynaptic cell membrane. It carries out the reaction chloride(in) = chloride(out). Its activity is regulated as follows. Potentiated by pentobarbital, loreclezole, and lanthanum and inhibited by zinc and furosemide. Introduction of the epsilon subunit to the receptor complex resulted in diminished modulatory effects by etomidate, propofol, pregnanolone and flurazepam. Epsilon subunit of the heteropentameric ligand-gated chloride channel gated by gamma-aminobutyric acid (GABA), a major inhibitory neurotransmitter in the brain. GABA-gated chloride channels, also named GABA(A) receptors (GABAAR), consist of five subunits arranged around a central pore and contain GABA active binding site(s) located at the alpha and beta subunit interfaces. When activated by GABA, GABAARs selectively allow the flow of chloride anions across the cell membrane down their electrochemical gradient. GABAARs containing epsilon subunits also permit spontaneous chloride channel activity while preserving the structural information required for GABA-gated openings. GABARs containing epsilon subunit may regulate cardiac function. The polypeptide is Gamma-aminobutyric acid receptor subunit epsilon (Homo sapiens (Human)).